The chain runs to 264 residues: S-adenosylmethionine decarboxylase proenzyme (264 aa).

S114 (schiff-base intermediate with substrate; via pyruvic acid) is an active-site residue. S114 carries the pyruvic acid (Ser); by autocatalysis modification. Residue H119 is the Proton acceptor; for processing activity of the active site. The Proton donor; for catalytic activity role is filled by C142.

The protein belongs to the prokaryotic AdoMetDC family. Type 2 subfamily. As to quaternary structure, heterooctamer of four alpha and four beta chains arranged as a tetramer of alpha/beta heterodimers. It depends on pyruvate as a cofactor. Is synthesized initially as an inactive proenzyme. Formation of the active enzyme involves a self-maturation process in which the active site pyruvoyl group is generated from an internal serine residue via an autocatalytic post-translational modification. Two non-identical subunits are generated from the proenzyme in this reaction, and the pyruvate is formed at the N-terminus of the alpha chain, which is derived from the carboxyl end of the proenzyme. The post-translation cleavage follows an unusual pathway, termed non-hydrolytic serinolysis, in which the side chain hydroxyl group of the serine supplies its oxygen atom to form the C-terminus of the beta chain, while the remainder of the serine residue undergoes an oxidative deamination to produce ammonia and the pyruvoyl group blocking the N-terminus of the alpha chain.

It carries out the reaction S-adenosyl-L-methionine + H(+) = S-adenosyl 3-(methylsulfanyl)propylamine + CO2. It participates in amine and polyamine biosynthesis; S-adenosylmethioninamine biosynthesis; S-adenosylmethioninamine from S-adenosyl-L-methionine: step 1/1. Its function is as follows. Catalyzes the decarboxylation of S-adenosylmethionine to S-adenosylmethioninamine (dcAdoMet), the propylamine donor required for the synthesis of the polyamines spermine and spermidine from the diamine putrescine. This is S-adenosylmethionine decarboxylase proenzyme from Chromohalobacter salexigens (strain ATCC BAA-138 / DSM 3043 / CIP 106854 / NCIMB 13768 / 1H11).